We begin with the raw amino-acid sequence, 313 residues long: MRLVTLAPAKVNLVLRVGPVRADGYHDLRTLMVPLDLGDRVDVRVSPRRGPVRCTVPGRPELDGPENLAARAAEAFRRRFGVDRAVSIRIEKRTPVTAGLGGGSSDAAAVLRCLARALRVRDGAALAALALEIGSDVPFFLGPGPAWAAGRGERLSRAEVPPLDLVLVYPADPSLAIRAGDAYRWLDEARASGSQAPRRLGRPGRWRPTLLGNDLQAPCVARKPALQALLGLLVGAGATAAIMSGSGPTVFGIFPGRGAARGAALAIQGRAKGGAAGVQVLLARTVRRHPRVSPWRSPRSASSRSTRRSSRPT.

Lys-10 is a catalytic residue. 95-105 (PVTAGLGGGSS) contributes to the ATP binding site. Asp-136 is an active-site residue. Residues 289-313 (HPRVSPWRSPRSASSRSTRRSSRPT) form a disordered region. Residues 292-304 (VSPWRSPRSASSR) are compositionally biased toward low complexity.

It belongs to the GHMP kinase family. IspE subfamily.

It carries out the reaction 4-CDP-2-C-methyl-D-erythritol + ATP = 4-CDP-2-C-methyl-D-erythritol 2-phosphate + ADP + H(+). Its pathway is isoprenoid biosynthesis; isopentenyl diphosphate biosynthesis via DXP pathway; isopentenyl diphosphate from 1-deoxy-D-xylulose 5-phosphate: step 3/6. Functionally, catalyzes the phosphorylation of the position 2 hydroxy group of 4-diphosphocytidyl-2C-methyl-D-erythritol. This Anaeromyxobacter dehalogenans (strain 2CP-1 / ATCC BAA-258) protein is 4-diphosphocytidyl-2-C-methyl-D-erythritol kinase.